Here is a 748-residue protein sequence, read N- to C-terminus: Elongation factor G, mitochondrial (748 aa).

The N-terminal 14 residues, 1–14 (MTISSFLRVRHSLA), are a transit peptide targeting the mitochondrion. The tr-type G domain occupies 40–318 (ERIRNIGISA…VLNYLPHPGE (279 aa)). GTP-binding positions include 49-56 (AHIDSGKT), 116-120 (DTPGH), and 170-173 (NKLD).

Belongs to the TRAFAC class translation factor GTPase superfamily. Classic translation factor GTPase family. EF-G/EF-2 subfamily.

Its subcellular location is the mitochondrion. The protein operates within protein biosynthesis; polypeptide chain elongation. Mitochondrial GTPase that catalyzes the GTP-dependent ribosomal translocation step during translation elongation. During this step, the ribosome changes from the pre-translocational (PRE) to the post-translocational (POST) state as the newly formed A-site-bound peptidyl-tRNA and P-site-bound deacylated tRNA move to the P and E sites, respectively. Catalyzes the coordinated movement of the two tRNA molecules, the mRNA and conformational changes in the ribosome. This Aedes aegypti (Yellowfever mosquito) protein is Elongation factor G, mitochondrial.